The primary structure comprises 641 residues: Raffinose carrier protein (641 aa).

Residues 1–506 form a permease region; the sequence is MQEEHNYKWV…GQVIPLAQVN (506 aa). 12 consecutive transmembrane segments (helical) span residues 25–45, 57–77, 93–113, 120–140, 168–188, 201–221, 253–273, 288–308, 317–337, 342–362, 394–414, and 429–449; these read AFYSILSGYLIIFITSHLFDT, LVTLIIMVLRIVELFIDPFIG, WVVVGGTVSSIILLLLFTNLG, AMIYLVVFAILYITMDIFYSF, LGSTIGGGLVGVLVMPAVIFF, WFIFALIICLIALISAWGVGL, LLWAALAYLFYGVGINILGSL, FSILSIINIFLGLIATSLFPV, GVFAGCLVFMLGGIAIFTIAG, LVLLAATMFGFPQQMVFLVVL, FGGAISNGVVGQIAIISGMTT, and FKLTMFAFPALMLLIAIGIFS. A PTS EIIA type-1 domain is found at 507 to 611; sequence DPTFAAGTLG…DDTVIMTVTN (105 aa). Histidine 559 bears the Phosphohistidine; by HPr mark.

This sequence in the N-terminal section; belongs to the sodium:galactoside symporter (TC 2.A.2) family.

It localises to the cell membrane. This is Raffinose carrier protein (rafP) from Pediococcus pentosaceus.